The following is a 434-amino-acid chain: D-inositol 3-phosphate glycosyltransferase (434 aa).

His-19 is a 1D-myo-inositol 3-phosphate binding site. UDP-N-acetyl-alpha-D-glucosamine contacts are provided by residues 25–26 (QP) and Gly-33. Residues 30–35 (DAGGMN), Lys-88, Tyr-121, Thr-145, and Arg-165 each bind 1D-myo-inositol 3-phosphate. UDP-N-acetyl-alpha-D-glucosamine is bound by residues Arg-239, Lys-244, and Gln-297. Residues Tyr-306, Arg-307, and Ala-309 each coordinate Mg(2+). Positions 319 and 327 each coordinate UDP-N-acetyl-alpha-D-glucosamine. Mg(2+) is bound at residue Thr-333. The segment at 414–434 (HPRPAARRSGRRFSMRRGVRT) is disordered.

It belongs to the glycosyltransferase group 1 family. MshA subfamily. In terms of assembly, homodimer.

The catalysed reaction is 1D-myo-inositol 3-phosphate + UDP-N-acetyl-alpha-D-glucosamine = 1D-myo-inositol 2-acetamido-2-deoxy-alpha-D-glucopyranoside 3-phosphate + UDP + H(+). Its function is as follows. Catalyzes the transfer of a N-acetyl-glucosamine moiety to 1D-myo-inositol 3-phosphate to produce 1D-myo-inositol 2-acetamido-2-deoxy-glucopyranoside 3-phosphate in the mycothiol biosynthesis pathway. The sequence is that of D-inositol 3-phosphate glycosyltransferase (mshA) from Mycolicibacterium smegmatis (strain ATCC 700084 / mc(2)155) (Mycobacterium smegmatis).